Here is a 316-residue protein sequence, read N- to C-terminus: Remorin 4.1 (316 aa).

3 disordered regions span residues 1-108, 125-202, and 267-287; these read MLSE…PSEL, NANA…SVGQ, and AQNE…SAEA. Residues 40 to 53 show a composition bias toward acidic residues; the sequence is EREEEVVVEEELEE. The segment covering 92 to 104 has biased composition (polar residues); it reads RHTSIRSVGSDTA. Over residues 125–135 the composition is skewed to low complexity; sequence NANAAAAAAAN. Composition is skewed to basic and acidic residues over residues 143–153 and 277–287; these read GVDDALGRIGE and KAEEKRASAEA. The stretch at 242–288 forms a coiled coil; it reads VEKANAWLKKYERKLEEKRAKAMEKAQNEVAKARRKAEEKRASAEAK.

The protein belongs to the remorin family. As to quaternary structure, interacts with BAK1. Phosphorylated by BRI1. Phosphorylation reduces the binding affinity to BAK1. In terms of tissue distribution, expressed in roots, leaf blades and leaf sheaths. Expressed at low levels in stems and spikelets.

It is found in the cell membrane. Functionally, functions in abscisic acid (ABA) signaling downstream of BZIP23. Acts as antagonistic and negative regulator of brassinosteroid (BR) signaling. Binds to BAK1 and inhibits its interaction with the BR receptor BRI1. Inhibits the formation and subsequent activation of the BRI1-BAK1 receptor complex. This Oryza sativa subsp. japonica (Rice) protein is Remorin 4.1.